The chain runs to 346 residues: Biotin synthase (346 aa).

Residues 38–256 (RQVQVSTLLS…IAVARIMMPT (219 aa)) enclose the Radical SAM core domain. [4Fe-4S] cluster is bound by residues Cys53, Cys57, and Cys60. Residues Cys97, Cys128, Cys188, and Arg260 each contribute to the [2Fe-2S] cluster site.

Belongs to the radical SAM superfamily. Biotin synthase family. As to quaternary structure, homodimer. [4Fe-4S] cluster is required as a cofactor. The cofactor is [2Fe-2S] cluster.

The catalysed reaction is (4R,5S)-dethiobiotin + (sulfur carrier)-SH + 2 reduced [2Fe-2S]-[ferredoxin] + 2 S-adenosyl-L-methionine = (sulfur carrier)-H + biotin + 2 5'-deoxyadenosine + 2 L-methionine + 2 oxidized [2Fe-2S]-[ferredoxin]. The protein operates within cofactor biosynthesis; biotin biosynthesis; biotin from 7,8-diaminononanoate: step 2/2. In terms of biological role, catalyzes the conversion of dethiobiotin (DTB) to biotin by the insertion of a sulfur atom into dethiobiotin via a radical-based mechanism. The chain is Biotin synthase from Shigella dysenteriae serotype 1 (strain Sd197).